The following is an 829-amino-acid chain: Periplasmic nitrate reductase (829 aa).

Positions 1–29 form a signal peptide, tat-type signal; it reads MKMTRRAFVKANAAASAAAVAGVTLPATA. The 57-residue stretch at 41-97 folds into the 4Fe-4S Mo/W bis-MGD-type domain; it reads ITWDKAPCRFCGTGCSVLVGTQNGKVVATQGDPEAPVNKGLNCIKGYFLSKIMYGKD. Positions 48, 51, 55, and 83 each coordinate [4Fe-4S] cluster. Residues Lys85, Gln152, Asn177, Cys181, 214 to 221, 245 to 249, 264 to 266, Met374, Gln378, Asn484, 510 to 511, Lys533, Asp560, and 718 to 727 each bind Mo-bis(molybdopterin guanine dinucleotide); these read WGSNMAEM, STYYH, QSD, SD, and TGRVLEHWHT. Phe794 contacts substrate. Mo-bis(molybdopterin guanine dinucleotide)-binding residues include Asn802 and Lys819.

It belongs to the prokaryotic molybdopterin-containing oxidoreductase family. NasA/NapA/NarB subfamily. Component of the periplasmic nitrate reductase NapAB complex composed of NapA and NapB. [4Fe-4S] cluster serves as cofactor. Requires Mo-bis(molybdopterin guanine dinucleotide) as cofactor. In terms of processing, predicted to be exported by the Tat system. The position of the signal peptide cleavage has not been experimentally proven.

Its subcellular location is the periplasm. It carries out the reaction 2 Fe(II)-[cytochrome] + nitrate + 2 H(+) = 2 Fe(III)-[cytochrome] + nitrite + H2O. In terms of biological role, catalytic subunit of the periplasmic nitrate reductase complex NapAB. Receives electrons from NapB and catalyzes the reduction of nitrate to nitrite. In Vibrio atlanticus (strain LGP32) (Vibrio splendidus (strain Mel32)), this protein is Periplasmic nitrate reductase.